Reading from the N-terminus, the 214-residue chain is GTP-binding nuclear protein GSP1/Ran (214 aa).

The Small GTPase Ran-type domain occupies 4–168 (EVPTFKLVLV…LWLARKLAGN (165 aa)). 15–22 (DGGTGKTT) is a GTP binding site. The segment at 34 to 42 (KKYIATIGV) is switch-I. Residues glycine 65, 119–122 (NKVD), and 147–149 (SAK) each bind GTP. The segment at 65-81 (GQEKFGGLRDGYYINAQ) is switch-II.

Belongs to the small GTPase superfamily. Ran family. In terms of assembly, found in a nuclear export complex with RanGTP, exportin and pre-miRNA.

It is found in the nucleus. Functionally, GTP-binding protein involved in nucleocytoplasmic transport. Required for the import of protein into the nucleus and also for RNA export. Involved in chromatin condensation and control of cell cycle. This Candida glabrata (strain ATCC 2001 / BCRC 20586 / JCM 3761 / NBRC 0622 / NRRL Y-65 / CBS 138) (Yeast) protein is GTP-binding nuclear protein GSP1/Ran (GSP1).